Consider the following 511-residue polypeptide: 2,3-bisphosphoglycerate-independent phosphoglycerate mutase (511 aa).

Position 12 (D12) interacts with Mn(2+). Y36 bears the Phosphotyrosine mark. S62 is a Mn(2+) binding site. S62 serves as the catalytic Phosphoserine intermediate. Substrate contacts are provided by residues H123, 153-154 (RD), R185, R191, 261-264 (RPDR), and K336. Mn(2+) contacts are provided by D403, H407, D444, H445, and H462.

This sequence belongs to the BPG-independent phosphoglycerate mutase family. In terms of assembly, monomer. Requires Mn(2+) as cofactor.

The enzyme catalyses (2R)-2-phosphoglycerate = (2R)-3-phosphoglycerate. It functions in the pathway carbohydrate degradation; glycolysis; pyruvate from D-glyceraldehyde 3-phosphate: step 3/5. Essential for rapid growth and for sporulation. Catalyzes the interconversion of 2-phosphoglycerate and 3-phosphoglycerate. The sequence is that of 2,3-bisphosphoglycerate-independent phosphoglycerate mutase from Bacillus pumilus (strain SAFR-032).